The sequence spans 924 residues: Periplasmic nitrate reductase (924 aa).

Residues 1 to 30 (MNRRDFIKNTAIASAASVAGLSVPSSMLGA) constitute a signal peptide (tat-type signal). The 57-residue stretch at 35-91 (WKWDKAVCRFCGTGCGIMIARKDGKIVATKGDPAAPVNRGLNCIKGYFNAKIMYGED) folds into the 4Fe-4S Mo/W bis-MGD-type domain. [4Fe-4S] cluster contacts are provided by cysteine 42, cysteine 45, cysteine 49, and cysteine 77. Mo-bis(molybdopterin guanine dinucleotide) contacts are provided by residues lysine 79, glutamine 147, asparagine 172, cysteine 176, 209-216 (WGANMAEM), methionine 417, glutamine 421, asparagine 527, 552-553 (SD), lysine 575, aspartate 602, and 814-823 (TGRVLEHWHS). Residue tryptophan 890 coordinates substrate. Mo-bis(molybdopterin guanine dinucleotide)-binding residues include asparagine 898 and lysine 915.

The protein belongs to the prokaryotic molybdopterin-containing oxidoreductase family. NasA/NapA/NarB subfamily. In terms of assembly, component of the periplasmic nitrate reductase NapAB complex composed of NapA and NapB. [4Fe-4S] cluster is required as a cofactor. The cofactor is Mo-bis(molybdopterin guanine dinucleotide). Predicted to be exported by the Tat system. The position of the signal peptide cleavage has not been experimentally proven.

It is found in the periplasm. The enzyme catalyses 2 Fe(II)-[cytochrome] + nitrate + 2 H(+) = 2 Fe(III)-[cytochrome] + nitrite + H2O. Its function is as follows. Catalytic subunit of the periplasmic nitrate reductase complex NapAB. Receives electrons from NapB and catalyzes the reduction of nitrate to nitrite. The protein is Periplasmic nitrate reductase of Campylobacter jejuni subsp. jejuni serotype O:6 (strain 81116 / NCTC 11828).